The primary structure comprises 100 residues: Small ribosomal subunit protein uS14 (100 aa).

The protein belongs to the universal ribosomal protein uS14 family. As to quaternary structure, part of the 30S ribosomal subunit. Contacts proteins S3 and S10.

In terms of biological role, binds 16S rRNA, required for the assembly of 30S particles and may also be responsible for determining the conformation of the 16S rRNA at the A site. The chain is Small ribosomal subunit protein uS14 from Synechococcus sp. (strain CC9902).